The sequence spans 1340 residues: MDFQNDFLTNPLRVTLYNPAENEYTKTFIFLGSVPANVLQACRKDLQRTPKDKEILQNFYGEDWEKKLSQYVVGGDGDDLDEFEKLFVEDSGEETNVMMPEIETMYSEYSIFPEDTFKDIREKIYVATGIPPYRQHIFFFQNNTLQVTYRLLLSGSGVALDIRDYKKEFQQVGGLNIDASMESQKDELYVEALDSFQLIKNIHHIFVADLNTLVAPMRRQISIAIEDNYQFDLLYYGLIMKYWPLLSPDAFKLLVQSPLQMEKQYPALSPSLTSLKKRLLLEQKLINFTYARAQQVIAKYEGNRLTRGTLAVTSAMIKISPLVNIQINVRNVFDLFPATPDIPQLVVFFYSKTGPTVVSKHHITSTEPEKFSNKTFRVPTIILIRFINKKAFILTIQNNGHYFIESNWSENERHDFNSVVSTLNNFINPIIHTINDMGPAAFPRGGSLPLPSNEDIQISISSMSVSTFWPYTLSSKGFTELKSRWREYEQAGIISVRGLQQTGVYNFLFKKGIYSYDPHEIERMIIISSGPGRKMDINVALLQNTYAYLFDTNVAARWETIYGGRNIRIYHRVTDIKIEMFNITQEEFNYLWVYLFVFLDNLITGPDKILVNKLSQLHDKQQGKGASQLRALQEQDPDLYDLRKYDTQATVYSVLCQHPRPPVIYSEAEVKSMPPAKRKELVKYWNFTEGVPAYYSCPHPDYPHLSLLEGRHPLNYCLPCCQKTKALLGTKRFYINNTCLTKHTFVEQDLEDLNTQTSRHTLSYGKKIPVNRIAFLPHQIADELFLNTIKEPDIFCIVGVEQTMLGISNAGLFYSLARILDLAPKALAIEIAKAANTPQYYILGNGAGNMFSSGAELASLILQTFVEQKNQLLQWDTTWQDIFLDLVAICYDLHCVFFKDKQGDFEFEVSPNTIQKILSPSKKIAIIFDTDEGIYPMAITQQKRFLKNSEAQYIFTEDDPVMEVIQSMSEFMCKDNWWDIHDVKNIPGYTVGKKLINRHNFCYALLIDSDTDRPIYFPIRLSSYIHDDIPIDFDLRPTQIASFKETWKFITLFNKQYKQYEIIPSAVLQNIKKEFVGFLSEGKTGLYFYYAPTQTLPAALEKLPIATLTIDPRDIDQAILYPLEEPYPQQNKANKAFYINHLYKFLLIEFFDVLYGLQSNTTRKHIENLFQKTDFQKITSVTEFYTKLSDFVDLNDIHTIKHILETTDAEHALKVLQKNIFNFDYTLLSPLQSYTYDELCQHLKKLLTPRIEFYEDIETIDRGLINIYTSCQYSTLNQPQCEKKRLRIPVNHFENYIHILAADILNPLKHSTLLLTGLGVIDDLQFILRPQEIISVKNKF.

It belongs to the asfivirus G1340L family.

The protein localises to the virion. Functionally, putative initation factor. The polypeptide is Early transcription factor large subunit homolog (African swine fever virus (isolate Tick/South Africa/Pretoriuskop Pr4/1996) (ASFV)).